We begin with the raw amino-acid sequence, 359 residues long: GTP 3',8-cyclase 1 (359 aa).

Positions 21 to 241 constitute a Radical SAM core domain; the sequence is RCRRMMGDLR…SLEKRYGRIE (221 aa). Position 30 (R30) interacts with GTP. [4Fe-4S] cluster contacts are provided by C37 and C41. Y43 lines the S-adenosyl-L-methionine pocket. Residue C44 participates in [4Fe-4S] cluster binding. R80 contacts GTP. G84 contacts S-adenosyl-L-methionine. T115 contributes to the GTP binding site. Residue S139 participates in S-adenosyl-L-methionine binding. A GTP-binding site is contributed by K176. M210 is an S-adenosyl-L-methionine binding site. C273 and C276 together coordinate [4Fe-4S] cluster. 278–280 serves as a coordination point for GTP; the sequence is RSR. Position 290 (C290) interacts with [4Fe-4S] cluster.

This sequence belongs to the radical SAM superfamily. MoaA family. As to quaternary structure, monomer and homodimer. The cofactor is [4Fe-4S] cluster.

It catalyses the reaction GTP + AH2 + S-adenosyl-L-methionine = (8S)-3',8-cyclo-7,8-dihydroguanosine 5'-triphosphate + 5'-deoxyadenosine + L-methionine + A + H(+). The protein operates within cofactor biosynthesis; molybdopterin biosynthesis. In terms of biological role, catalyzes the cyclization of GTP to (8S)-3',8-cyclo-7,8-dihydroguanosine 5'-triphosphate. The protein is GTP 3',8-cyclase 1 of Mycobacterium tuberculosis (strain CDC 1551 / Oshkosh).